The primary structure comprises 195 residues: Insertion element IS136 uncharacterized protein Atu4601 (195 aa).

One can recognise an Integrase catalytic domain in the interval 25–194 (MVMRSNLRWC…SPRQFIRAKS (170 aa)).

This chain is Insertion element IS136 uncharacterized protein Atu4601, found in Agrobacterium fabrum (strain C58 / ATCC 33970) (Agrobacterium tumefaciens (strain C58)).